We begin with the raw amino-acid sequence, 266 residues long: Hydroxyethylthiazole kinase (266 aa).

Residue Met44 coordinates substrate. Positions 120 and 166 each coordinate ATP. Residue Gly193 participates in substrate binding.

The protein belongs to the Thz kinase family. Mg(2+) serves as cofactor.

The enzyme catalyses 5-(2-hydroxyethyl)-4-methylthiazole + ATP = 4-methyl-5-(2-phosphooxyethyl)-thiazole + ADP + H(+). It functions in the pathway cofactor biosynthesis; thiamine diphosphate biosynthesis; 4-methyl-5-(2-phosphoethyl)-thiazole from 5-(2-hydroxyethyl)-4-methylthiazole: step 1/1. Functionally, catalyzes the phosphorylation of the hydroxyl group of 4-methyl-5-beta-hydroxyethylthiazole (THZ). The protein is Hydroxyethylthiazole kinase of Syntrophomonas wolfei subsp. wolfei (strain DSM 2245B / Goettingen).